The chain runs to 235 residues: Small ribosomal subunit protein uS2c (235 aa).

This sequence belongs to the universal ribosomal protein uS2 family.

It is found in the plastid. The sequence is that of Small ribosomal subunit protein uS2c (rps2) from Euglena longa (Euglenophycean alga).